We begin with the raw amino-acid sequence, 35 residues long: Cupiennin-2b (35 aa).

Glutamine 35 is subject to Glutamine amide.

In terms of tissue distribution, expressed by the venom gland.

The protein resides in the secreted. The protein is Cupiennin-2b of Cupiennius salei (American wandering spider).